The primary structure comprises 845 residues: Envelope glycoprotein B (845 aa).

Positions 1 to 26 (MTPRSRLATLGTVILLVCFCAGAAHS) are cleaved as a signal peptide. Residues 27–732 (RGDTFQTSSS…TGFINFIKHP (706 aa)) lie on the Virion surface side of the membrane. Residues 29-57 (DTFQTSSSPTPPGSSSKAPTKPGEEASGP) are disordered. Low complexity predominate over residues 33 to 49 (TSSSPTPPGSSSKAPTK). 5 disulfide bridges follow: Cys68–Cys528, Cys85–Cys484, Cys157–Cys222, Cys315–Cys362, and Cys550–Cys587. The involved in fusion and/or binding to host membrane stretch occupies residues 124-130 (VYRGLTE). Residue Asn179 is glycosylated (N-linked (GlcNAc...) asparagine; by host). Residues 208 to 216 (GWFPGIYRV) are involved in fusion and/or binding to host membrane. N-linked (GlcNAc...) asparagine; by host glycans are attached at residues Asn254, Asn275, Asn355, Asn368, Asn372, Asn385, and Asn408. The tract at residues 411 to 451 (HAQGDSGNPTSSPPPSASPMTTSASRRKRRSASTAAAGGGG) is disordered. Asn455, Asn562, Asn599, Asn614, and Asn628 each carry an N-linked (GlcNAc...) asparagine; by host glycan. The segment at 678–730 (LDNTIDMNKERFVRDLSEIVADLGGIGKTVVNVASSVVTLCGSLVTGFINFIK) is hydrophobic membrane proximal region. A helical transmembrane segment spans residues 733–753 (LGGMLMIIIVIAIILIIFMLS). The Intravirion portion of the chain corresponds to 754-845 (RRTNTIAQAP…SLDISPETGE (92 aa)). A disordered region spans residues 802–845 (RQKADDLKKSTPSVFQRTANGLRQRLRGYKPLTQSLDISPETGE). The segment covering 811–822 (STPSVFQRTANG) has biased composition (polar residues). The Internalization motif signature appears at 830–833 (YKPL).

The protein belongs to the herpesviridae glycoprotein B family. In terms of assembly, homotrimer; disulfide-linked. Binds to heparan sulfate proteoglycans. Interacts with gH/gL heterodimer. Interacts with host ITGAV-ITGB3; this interaction mediates viral entry. A proteolytic cleavage by host furin generates two subunits that remain linked by disulfide bonds.

The protein resides in the virion membrane. The protein localises to the host cell membrane. It is found in the host endosome membrane. Its subcellular location is the host Golgi apparatus membrane. Its function is as follows. Envelope glycoprotein that forms spikes at the surface of the virion envelope. Participates in viral entry through an RGD motif that binds ITGAV-ITGB3. Membrane fusion is mediated by the fusion machinery composed at least of gB and the heterodimer gH/gL. May be involved in the fusion between the virion envelope and the outer nuclear membrane during virion egress. The polypeptide is Envelope glycoprotein B (Homo sapiens (Human)).